The chain runs to 66 residues: Large ribosomal subunit protein uL29 (66 aa).

The protein belongs to the universal ribosomal protein uL29 family.

The chain is Large ribosomal subunit protein uL29 from Syntrophobacter fumaroxidans (strain DSM 10017 / MPOB).